Consider the following 434-residue polypeptide: MEKSVNVIGAGLAGSEAVWQLVNRGVKVDLYEMRPVKQTPAHHTDKFAELVCTNSLRANGLTNAVGVIKEEMRMLDSIIIEAADKASVPAGGALAVDRHEFSGYITDKVKNHPLVTVHTEEVTTIPEGPTIIATGPLTSPALADEIKQLTGEEYLYFYDAAAPIIEKDSIDMDKVYLKSRYDKGEAAYLNCPMSEEEFNAFYEALVTAETAALKEFEKEVFFEGCMPIEVMAKRGIKTMLFGPLKPVGLEDPKTGKRPYAVLQLRQDDAAGTLYNMVGFQTHLKWGEQKRVFGMIPGLENAEIVRYGVMHRNTFINSPTVLEPTYQLKTRNDLFFAGQMTGVEGYVESAASGLAAGINAANFIQEKELVVFPTETAIGSLAHYITSASKKSFQPMNVNFGLFPELETKIRAKQERNEKLAERALNAIKKVAEEL.

9-14 (GAGLAG) contacts FAD.

This sequence belongs to the MnmG family. TrmFO subfamily. It depends on FAD as a cofactor.

Its subcellular location is the cytoplasm. The catalysed reaction is uridine(54) in tRNA + (6R)-5,10-methylene-5,6,7,8-tetrahydrofolate + NADH + H(+) = 5-methyluridine(54) in tRNA + (6S)-5,6,7,8-tetrahydrofolate + NAD(+). The enzyme catalyses uridine(54) in tRNA + (6R)-5,10-methylene-5,6,7,8-tetrahydrofolate + NADPH + H(+) = 5-methyluridine(54) in tRNA + (6S)-5,6,7,8-tetrahydrofolate + NADP(+). Its function is as follows. Catalyzes the folate-dependent formation of 5-methyl-uridine at position 54 (M-5-U54) in all tRNAs. The protein is Methylenetetrahydrofolate--tRNA-(uracil-5-)-methyltransferase TrmFO of Listeria monocytogenes serovar 1/2a (strain ATCC BAA-679 / EGD-e).